Reading from the N-terminus, the 250-residue chain is Agamous-like MADS-box protein AGL8 homolog (250 aa).

The 55-residue stretch at 3–57 (RGRVQLKRIENKINRQVTFSKRRSGLLKKAHEISVLCDAEVGLIVFSTKGKLFEY) folds into the MADS-box domain. In terms of domain architecture, K-box spans 88-178 (PGSWTLEHAK…SKKVKEREKE (91 aa)).

Abundant in vegetative organs.

The protein localises to the nucleus. Probable transcription factor. The protein is Agamous-like MADS-box protein AGL8 homolog of Solanum tuberosum (Potato).